The sequence spans 796 residues: AUGMIN subunit 5 (796 aa).

Residues 79–120 form a disordered region; sequence HGGSSNASIGSSVNPGKEESKSKGRRKDKTVTGESSSYAEDR. The span at 80–92 shows a compositional bias: polar residues; sequence GGSSNASIGSSVN. Coiled coils occupy residues 115 to 191 and 462 to 501; these read SYAE…EATR and GKER…LKKK.

It belongs to the HAUS5 family. In terms of assembly, part of the augmin complex composed of 8 subunits. The complex acts on microtubules and interacts with gamma-tubulin in spindles and the phragmoplast.

Its subcellular location is the cytoplasm. It is found in the cytoskeleton. The protein localises to the spindle. The protein resides in the phragmoplast. Its function is as follows. Involved in microtubules reorganization during spindle and phragmoplast development. The protein is AUGMIN subunit 5 of Arabidopsis thaliana (Mouse-ear cress).